A 300-amino-acid chain; its full sequence is Urease accessory protein UreD (300 aa).

Belongs to the UreD family. UreD, UreF and UreG form a complex that acts as a GTP-hydrolysis-dependent molecular chaperone, activating the urease apoprotein by helping to assemble the nickel containing metallocenter of UreC. The UreE protein probably delivers the nickel.

The protein resides in the cytoplasm. Required for maturation of urease via the functional incorporation of the urease nickel metallocenter. This Prochlorococcus marinus (strain MIT 9312) protein is Urease accessory protein UreD.